Here is a 375-residue protein sequence, read N- to C-terminus: Acetylornithine aminotransferase (375 aa).

Pyridoxal 5'-phosphate contacts are provided by residues 93–94 (GT) and phenylalanine 120. Arginine 123 serves as a coordination point for N(2)-acetyl-L-ornithine. 205-208 (DEVQ) contacts pyridoxal 5'-phosphate. N6-(pyridoxal phosphate)lysine is present on lysine 234. N(2)-acetyl-L-ornithine is bound at residue threonine 262. Threonine 263 lines the pyridoxal 5'-phosphate pocket.

This sequence belongs to the class-III pyridoxal-phosphate-dependent aminotransferase family. ArgD subfamily. Homodimer. Pyridoxal 5'-phosphate is required as a cofactor.

It is found in the cytoplasm. It catalyses the reaction N(2)-acetyl-L-ornithine + 2-oxoglutarate = N-acetyl-L-glutamate 5-semialdehyde + L-glutamate. The protein operates within amino-acid biosynthesis; L-arginine biosynthesis; N(2)-acetyl-L-ornithine from L-glutamate: step 4/4. The sequence is that of Acetylornithine aminotransferase from Staphylococcus epidermidis (strain ATCC 12228 / FDA PCI 1200).